A 303-amino-acid chain; its full sequence is MEKNHSSGEWEKMKNEINELMIEGRDYAHQFGSASSQETREHLAKKILQSYHKSLTIMNYSGELDQVSQGGGSPKSDDSDQEPLVIKSSKKSMPRWSSKVRIAPGAGVDRTLDDGFSWRKYGQKDILGAKFPRGYYRCTYRKSQGCEATKQVQRSDENQMLLEISYRGIHSCSQAANVGTTMPIQNLEPNQTQEHGNLDMVKESVDNYNHQAHLHHNLHYPLSSTPNLENNNAYMLQMRDQNIEYFGSTSFSSDLGTSINYNFPASGSASHSASNSPSTVPLESPFESYDPNHPYGGFGGFYS.

Residues 65–92 (DQVSQGGGSPKSDDSDQEPLVIKSSKKS) form a disordered region. A DNA-binding region (WRKY) is located at residues 107–175 (GVDRTLDDGF…YRGIHSCSQA (69 aa)). Residues 266–278 (SGSASHSASNSPS) are compositionally biased toward low complexity. Positions 266–291 (SGSASHSASNSPSTVPLESPFESYDP) are disordered.

The protein belongs to the WRKY group III family. In terms of assembly, interacts with WRKY53, WRKY54 and WRKY70.

The protein resides in the nucleus. Functionally, transcription factor. Interacts specifically with the W box (5'-(T)TGAC[CT]-3'), a frequently occurring elicitor-responsive cis-acting element. The protein is Probable WRKY transcription factor 30 of Arabidopsis thaliana (Mouse-ear cress).